Reading from the N-terminus, the 453-residue chain is Probable multidrug resistance protein NorM (453 aa).

The next 12 helical transmembrane spans lie at 12–34, 54–76, 96–118, 128–150, 162–184, 194–216, 243–265, 285–307, 319–338, 358–380, 387–406, and 416–438; these read VLFLKIFFPILIYQFANYSASFV, TSIWNPFFTFLTGIVSALVPIIG, YLALGLSVVLLGMVLFLAPTILN, AVAVRYLWFLSIGIIPLLLFSVI, LSMYLMLLLLPLNSGFNYLLIYG, AGAGLGTSLAYWVLLGISVLVLF, LGLPIGGTVFAEVAVFSVVGLIM, LMYAFPMSISSAMAIVVSYEVGA, LGRWTALIFAAFTLTFLYIF, RFLTYSLFFQLADTFAAPLQGIL, VIPFYLGLLGYWGVAIPVAT, and AYSYWIGLIISLIVSGALYRWRL.

The protein belongs to the multi antimicrobial extrusion (MATE) (TC 2.A.66.1) family.

Its subcellular location is the cell membrane. Its function is as follows. Multidrug efflux pump. The protein is Probable multidrug resistance protein NorM (norM) of Streptococcus pneumoniae (strain ATCC BAA-255 / R6).